Consider the following 253-residue polypeptide: Trypsin delta (253 aa).

The first 22 residues, methionine 1 to glycine 22, serve as a signal peptide directing secretion. The propeptide at leucine 23 to arginine 30 is activation peptide. Positions isoleucine 31–alanine 253 constitute a Peptidase S1 domain. Cysteine 56 and cysteine 72 are joined by a disulfide. Active-site charge relay system residues include histidine 71 and aspartate 116. 2 disulfide bridges follow: cysteine 180–cysteine 197 and cysteine 206–cysteine 230. Serine 210 (charge relay system) is an active-site residue.

This sequence belongs to the peptidase S1 family.

It is found in the secreted. It localises to the extracellular space. It catalyses the reaction Preferential cleavage: Arg-|-Xaa, Lys-|-Xaa.. The chain is Trypsin delta from Drosophila erecta (Fruit fly).